Consider the following 196-residue polypeptide: Heat shock protein beta-8 (196 aa).

Residues 1 to 34 (MADGQMPFPCHYTSRRRRDPFRDSPLSSRLLDDG) form a disordered region. Residues 23 to 34 (DSPLSSRLLDDG) are compositionally biased toward low complexity. Phosphoserine is present on residues Ser24 and Ser57. Thr63 carries the post-translational modification Phosphothreonine. Asymmetric dimethylarginine is present on residues Arg71 and Arg78. Residues 74 to 185 (TAMTRFGVPA…PFGESSFNNE (112 aa)) enclose the sHSP domain. At Ser87 the chain carries Phosphoserine. Positions 176-196 (PFGESSFNNELPQDGQEVTCT) are disordered. The segment covering 178 to 196 (GESSFNNELPQDGQEVTCT) has biased composition (polar residues).

The protein belongs to the small heat shock protein (HSP20) family. In terms of assembly, monomer. Forms a ternary complex with BAG3 and HSPA1A. Component of the chaperone-assisted selective autophagy (CASA) complex consisting of BAG3, HSPA8/HSC70, HSPB8 and STUB1/CHIP. Interacts with HSPB1. Interacts with DNAJB6. Interacts with BAG3. Post-translationally, phosphorylated.

Its subcellular location is the cytoplasm. The protein resides in the nucleus. In terms of biological role, involved in the chaperone-assisted selective autophagy (CASA), a crucial process for protein quality control, particularly in mechanical strained cells and tissues such as muscle. Displays temperature-dependent chaperone activity. In Bos taurus (Bovine), this protein is Heat shock protein beta-8 (HSPB8).